Here is a 383-residue protein sequence, read N- to C-terminus: PqqA peptide cyclase (383 aa).

The Radical SAM core domain maps to 11-226 (PGPPLWLLAE…TNQWREKLAA (216 aa)). 3 residues coordinate [4Fe-4S] cluster: C25, C29, and C32.

It belongs to the radical SAM superfamily. PqqE family. Interacts with PqqD. The interaction is necessary for activity of PqqE. The cofactor is [4Fe-4S] cluster.

It carries out the reaction [PQQ precursor protein] + S-adenosyl-L-methionine = E-Y cross-linked-[PQQ precursor protein] + 5'-deoxyadenosine + L-methionine + H(+). It participates in cofactor biosynthesis; pyrroloquinoline quinone biosynthesis. Catalyzes the cross-linking of a glutamate residue and a tyrosine residue in the PqqA protein as part of the biosynthesis of pyrroloquinoline quinone (PQQ). The sequence is that of PqqA peptide cyclase from Azotobacter vinelandii (strain DJ / ATCC BAA-1303).